Here is a 131-residue protein sequence, read N- to C-terminus: Insulin-like 3 (131 aa).

Positions Met1–Ala24 are cleaved as a signal peptide. Intrachain disulfides connect Cys34–Cys117, Cys46–Cys130, and Cys116–Cys121. Positions Pro58 to His104 are cleaved as a propeptide — c peptide like. The disordered stretch occupies residues Ala86–Arg105.

It belongs to the insulin family. As to quaternary structure, heterodimer of a B chain and an A chain linked by two disulfide bonds. Highest expression in the Leydig cells of the testis.

It localises to the secreted. Functionally, seems to play a role in testicular function. May be a trophic hormone with a role in testicular descent in fetal life. Is a ligand for LGR8 receptor. This Callithrix jacchus (White-tufted-ear marmoset) protein is Insulin-like 3 (INSL3).